Consider the following 364-residue polypeptide: Protein PTOV1 homolog (364 aa).

A disordered region spans residues 187 to 207; it reads AKRKPGVKTPKQPQPEEPPPV.

It belongs to the Mediator complex subunit 25 family. PTOV1 subfamily.

In Drosophila melanogaster (Fruit fly), this protein is Protein PTOV1 homolog.